Here is a 271-residue protein sequence, read N- to C-terminus: uncharacterized protein (271 aa).

A disordered region spans residues 233-261; it reads VEPDPNRFSEPVDQPTLVEEGKEARRTER. Residues 251–261 are compositionally biased toward basic and acidic residues; it reads EEGKEARRTER.

May be involved in swimming motility. This is an uncharacterized protein from Haloferax volcanii (strain ATCC 29605 / DSM 3757 / JCM 8879 / NBRC 14742 / NCIMB 2012 / VKM B-1768 / DS2) (Halobacterium volcanii).